A 245-amino-acid chain; its full sequence is Octanoyltransferase (245 aa).

The BPL/LPL catalytic domain occupies 54–242 (KTAHEQVWLL…AFEKIFGPTI (189 aa)). Substrate contacts are provided by residues 93–100 (RGGEFTYH), 173–175 (AIG), and 186–188 (GVS). C204 functions as the Acyl-thioester intermediate in the catalytic mechanism.

It belongs to the LipB family.

Its subcellular location is the cytoplasm. The enzyme catalyses octanoyl-[ACP] + L-lysyl-[protein] = N(6)-octanoyl-L-lysyl-[protein] + holo-[ACP] + H(+). It functions in the pathway protein modification; protein lipoylation via endogenous pathway; protein N(6)-(lipoyl)lysine from octanoyl-[acyl-carrier-protein]: step 1/2. Its function is as follows. Catalyzes the transfer of endogenously produced octanoic acid from octanoyl-acyl-carrier-protein onto the lipoyl domains of lipoate-dependent enzymes. Lipoyl-ACP can also act as a substrate although octanoyl-ACP is likely to be the physiological substrate. The protein is Octanoyltransferase of Bartonella tribocorum (strain CIP 105476 / IBS 506).